Reading from the N-terminus, the 321-residue chain is MAKYTRGTVTAFSPFDARADAEALRKAMKGMGTDEETILKILTSRNNAQRQEIASAFKTLFGRDLVDDLKSELTGKFETLMVSLMRPARIFDAHALKHAIKGAGTNEKVLTEILASRTPAEVQNIKQVYMQEYEANLEDKITGETSGHFQRLLVVLLQANRDPDGRVDEALVEKDAQVLFRAGELKWGTDEETFITILGTRSVSHLRRVFDKYMTISGFQIEETIDRETSGDLEKLLLAVVKCIRSVPAYFAETLYYSMKGAGTDDDTLIRVMVSRSEIDLLDIRHEFRKNFAKSLYQMIQKDTSGDYRKALLLLCGGDDE.

Annexin repeat units follow at residues 15–86, 87–158, 170–242, and 246–317; these read FDAR…SLMR, PARI…VLLQ, ALVE…AVVK, and SVPA…LLCG.

The protein belongs to the annexin family.

Its function is as follows. Collagen-binding protein. The protein is Annexin A5 (ANXA5) of Gallus gallus (Chicken).